The sequence spans 1099 residues: Glutamine--fructose-6-phosphate aminotransferase [isomerizing] (1099 aa).

The Nucleophile; for GATase activity role is filled by C2. The 70-residue stretch at 2-71 folds into the Glutamine amidotransferase type-2; first part domain; it reads CGIIGYIGND…DIDGNIGIGH (70 aa). The HTH cro/C1-type domain occupies 198-253; it reads LRKVREKLGLTRKDVEKLCGVKEIYIVKIETGKLESIEEERLKKLCSLYGINFEEI. The 136-residue stretch at 278 to 413 folds into the DOD-type homing endonuclease domain; that stretch reads IIGYIIGDGH…IQFLLLRFGI (136 aa). The region spanning 571–723 is the Glutamine amidotransferase type-2; second part domain; it reads SRWATHGNVC…DGDVVVIKKK (153 aa). 2 consecutive SIS domains span residues 786 to 923 and 948 to 1089; these read LAKC…LLGR and TIKE…VDKP. The For Fru-6P isomerization activity role is filled by K1094.

It in the C-terminal section; belongs to the SIS family. GFAT subfamily. In terms of assembly, homodimer. Post-translationally, this protein undergoes a protein self splicing that involves a post-translational excision of the intervening region (intein) followed by peptide ligation.

The protein localises to the cytoplasm. It carries out the reaction D-fructose 6-phosphate + L-glutamine = D-glucosamine 6-phosphate + L-glutamate. Its function is as follows. Catalyzes the first step in hexosamine metabolism, converting fructose-6P into glucosamine-6P using glutamine as a nitrogen source. The protein is Glutamine--fructose-6-phosphate aminotransferase [isomerizing] (glmS) of Methanocaldococcus jannaschii (strain ATCC 43067 / DSM 2661 / JAL-1 / JCM 10045 / NBRC 100440) (Methanococcus jannaschii).